Here is a 670-residue protein sequence, read N- to C-terminus: Leiomodin-3 (670 aa).

Disordered regions lie at residues 34 to 72 (EMDD…EEID), 94 to 120 (EIAP…GSFD), 139 to 165 (EEER…EDKV), and 202 to 274 (EDKV…NWVP). Basic and acidic residues-rich tracts occupy residues 40–63 (PDER…RDCT), 97–112 (PDER…DQTD), 153–163 (TNEEHEAKNED), 205–214 (VCDKPVKTDL), and 249–261 (TETK…KEDS). Residues 150–183 (SQKTNEEHEAKNEDKVEELELVYEEIVEEVEGGQ) are a coiled coil. Residues 464-494 (DRQRQQRMEEQKLQQMKEQRKVMEMYEDSLN) are a coiled coil. The disordered stretch occupies residues 517–556 (NGAEDIPEDSPEPSPQPSPPHQLCKTQHLAPQQHPPNLST). Positions 637–656 (PRDHLLSEIRQSNVAYLKAV) constitute a WH2 domain.

The protein belongs to the tropomodulin family. Expressed in muscle (at protein level).

It is found in the cytoplasm. It localises to the myofibril. The protein localises to the sarcomere. The protein resides in the a band. Its subcellular location is the m line. It is found in the cytoskeleton. In terms of biological role, essential for the organization of sarcomeric thin filaments in skeletal muscle. This chain is Leiomodin-3, found in Danio rerio (Zebrafish).